We begin with the raw amino-acid sequence, 676 residues long: Methionine--tRNA ligase (676 aa).

The short motif at 15-25 (PYANGSIHLGH) is the 'HIGH' region element. Residues Cys-146, Cys-149, Cys-159, and Cys-162 each coordinate Zn(2+). The short motif at 332–336 (KMSKS) is the 'KMSKS' region element. An ATP-binding site is contributed by Lys-335. Positions 574-676 (DFAKVDMRIA…SGAQPGMQVK (103 aa)) constitute a tRNA-binding domain.

This sequence belongs to the class-I aminoacyl-tRNA synthetase family. MetG type 1 subfamily. Homodimer. It depends on Zn(2+) as a cofactor.

It is found in the cytoplasm. It catalyses the reaction tRNA(Met) + L-methionine + ATP = L-methionyl-tRNA(Met) + AMP + diphosphate. Functionally, is required not only for elongation of protein synthesis but also for the initiation of all mRNA translation through initiator tRNA(fMet) aminoacylation. The sequence is that of Methionine--tRNA ligase from Pectobacterium atrosepticum (strain SCRI 1043 / ATCC BAA-672) (Erwinia carotovora subsp. atroseptica).